Consider the following 219-residue polypeptide: 7-methyl-GTP pyrophosphatase (219 aa).

The active-site Proton acceptor is the D89.

This sequence belongs to the Maf family. YceF subfamily. The cofactor is a divalent metal cation.

The protein localises to the cytoplasm. It carries out the reaction N(7)-methyl-GTP + H2O = N(7)-methyl-GMP + diphosphate + H(+). In terms of biological role, nucleoside triphosphate pyrophosphatase that hydrolyzes 7-methyl-GTP (m(7)GTP). May have a dual role in cell division arrest and in preventing the incorporation of modified nucleotides into cellular nucleic acids. This is 7-methyl-GTP pyrophosphatase from Polaromonas sp. (strain JS666 / ATCC BAA-500).